The following is an 884-amino-acid chain: Lon protease homolog 2, peroxisomal (884 aa).

The Lon N-terminal domain maps to 12-255 (LAILPFRNKV…KATELVDRHL (244 aa)). The tract at residues 67–101 (SLLSPGVGSDSGEGGSKAPGGSAGESTKQDTKNGK) is disordered. The span at 75 to 89 (SDSGEGGSKAPGGSA) shows a compositional bias: gly residues. Position 408 to 415 (408 to 415 (GPPGVGKT)) interacts with ATP. The Lon proteolytic domain occupies 689–874 (VASPGVSVGL…EEVLDHAFEG (186 aa)). Catalysis depends on residues serine 780 and lysine 823. The Microbody targeting signal signature appears at 882–884 (SKL).

The protein belongs to the peptidase S16 family.

Its subcellular location is the peroxisome matrix. It carries out the reaction Hydrolysis of proteins in presence of ATP.. Its function is as follows. ATP-dependent serine protease that mediates the selective degradation of misfolded and unassembled polypeptides in the peroxisomal matrix. Necessary for type 2 peroxisome targeting signal (PTS2)-containing protein processing and facilitates peroxisome matrix protein import. This Oryza sativa subsp. japonica (Rice) protein is Lon protease homolog 2, peroxisomal.